An 883-amino-acid polypeptide reads, in one-letter code: Phosphoenolpyruvate carboxylase (883 aa).

Residues His-138 and Lys-546 contribute to the active site.

It belongs to the PEPCase type 1 family. Mg(2+) serves as cofactor.

The enzyme catalyses oxaloacetate + phosphate = phosphoenolpyruvate + hydrogencarbonate. Functionally, forms oxaloacetate, a four-carbon dicarboxylic acid source for the tricarboxylic acid cycle. The polypeptide is Phosphoenolpyruvate carboxylase (Escherichia coli O127:H6 (strain E2348/69 / EPEC)).